We begin with the raw amino-acid sequence, 435 residues long: CUB and peptidase domain-containing protein 1 (435 aa).

The first 16 residues, 1–16, serve as a signal peptide directing secretion; sequence SGFHLSFSFFRRAVCG. Residues 25 to 261 form the Peptidase S1 domain; that stretch reads IVGGTVAPIN…LKSWITGKIS (237 aa). A disulfide bridge links Cys50 with Cys66. Active-site charge relay system residues include His65 and Asp116. Intrachain disulfides connect Cys151/Cys218, Cys182/Cys197, Cys208/Cys237, and Cys322/Cys341. Residue Ser212 is the Charge relay system of the active site. Residues 256–378 enclose the CUB domain; it reads ITGKISRSPA…SGFHLSFSFF (123 aa).

This sequence belongs to the peptidase S1 family. As to expression, component of the acid-insoluble organic matrix of the aragonitic skeleton (at protein level).

Its subcellular location is the secreted. In Acropora millepora (Staghorn coral), this protein is CUB and peptidase domain-containing protein 1.